The primary structure comprises 240 residues: E3 ubiquitin-protein ligase LubX (240 aa).

2 U-box domains span residues 30-103 (TTPT…QTNY) and 125-198 (EIPD…RKRE).

Post-translationally, ubiquitinated in the presence of host E1 ubiquitin-activating enzyme, E2 ubiquitin-conjugating enzyme and ubiquitin.

It localises to the secreted. It is found in the host cell. It catalyses the reaction S-ubiquitinyl-[E2 ubiquitin-conjugating enzyme]-L-cysteine + [acceptor protein]-L-lysine = [E2 ubiquitin-conjugating enzyme]-L-cysteine + N(6)-ubiquitinyl-[acceptor protein]-L-lysine.. Its function is as follows. Effector proteins function to alter host cell physiology and promote bacterial survival in host tissues. This protein is an E3 ubiquitin ligase that interferes with host's ubiquitination pathway. The sequence is that of E3 ubiquitin-protein ligase LubX (lubX) from Legionella pneumophila (strain Paris).